The chain runs to 394 residues: S-adenosylmethionine synthase (394 aa).

Glu10 contributes to the Mg(2+) binding site. His16 lines the ATP pocket. Glu44 contacts K(+). Glu57 and Gln100 together coordinate L-methionine. Residues 168–170, 236–239, Asp247, 253–254, Ala270, Lys274, and Lys278 contribute to the ATP site; these read DGK, SGRF, and RK. L-methionine is bound at residue Asp247. Lys278 is an L-methionine binding site.

The protein belongs to the AdoMet synthase family. In terms of assembly, homotetramer. Requires Mn(2+) as cofactor. It depends on Mg(2+) as a cofactor. Co(2+) serves as cofactor. The cofactor is K(+).

It localises to the cytoplasm. The catalysed reaction is L-methionine + ATP + H2O = S-adenosyl-L-methionine + phosphate + diphosphate. Its pathway is amino-acid biosynthesis; S-adenosyl-L-methionine biosynthesis; S-adenosyl-L-methionine from L-methionine: step 1/1. Catalyzes the formation of S-adenosylmethionine from methionine and ATP. The reaction comprises two steps that are both catalyzed by the same enzyme: formation of S-adenosylmethionine (AdoMet) and triphosphate, and subsequent hydrolysis of the triphosphate. This chain is S-adenosylmethionine synthase (METK), found in Medicago truncatula (Barrel medic).